The chain runs to 284 residues: Bifunctional protein FolD (284 aa).

Residues 164–166 (GTS) and isoleucine 230 each bind NADP(+).

Belongs to the tetrahydrofolate dehydrogenase/cyclohydrolase family. As to quaternary structure, homodimer.

It catalyses the reaction (6R)-5,10-methylene-5,6,7,8-tetrahydrofolate + NADP(+) = (6R)-5,10-methenyltetrahydrofolate + NADPH. The catalysed reaction is (6R)-5,10-methenyltetrahydrofolate + H2O = (6R)-10-formyltetrahydrofolate + H(+). Its pathway is one-carbon metabolism; tetrahydrofolate interconversion. Functionally, catalyzes the oxidation of 5,10-methylenetetrahydrofolate to 5,10-methenyltetrahydrofolate and then the hydrolysis of 5,10-methenyltetrahydrofolate to 10-formyltetrahydrofolate. The chain is Bifunctional protein FolD from Mycoplasma capricolum subsp. capricolum (strain California kid / ATCC 27343 / NCTC 10154).